A 464-amino-acid chain; its full sequence is Probable pectin lyase F (464 aa).

The signal sequence occupies residues 1–20 (MAIIRSVIAATALLGAAVNA). A disulfide bridge links Cys80 with Cys103. A glycan (N-linked (GlcNAc...) asparagine) is linked at Asn126. The active site involves Arg252. A disulfide bridge links Cys319 with Cys327. The disordered stretch occupies residues 424 to 464 (EHEVSTPAVPTPTPVPSSVGSHGSTAGSSHPPAFSRTSFES). A compositionally biased stretch (low complexity) spans 439 to 448 (PSSVGSHGST).

This sequence belongs to the polysaccharide lyase 1 family.

The protein resides in the secreted. It catalyses the reaction Eliminative cleavage of (1-&gt;4)-alpha-D-galacturonan methyl ester to give oligosaccharides with 4-deoxy-6-O-methyl-alpha-D-galact-4-enuronosyl groups at their non-reducing ends.. Pectinolytic enzymes consist of four classes of enzymes: pectin lyase, polygalacturonase, pectin methylesterase and rhamnogalacturonase. Among pectinolytic enzymes, pectin lyase is the most important in depolymerization of pectin, since it cleaves internal glycosidic bonds of highly methylated pectins. The polypeptide is Probable pectin lyase F (pelF) (Emericella nidulans (strain FGSC A4 / ATCC 38163 / CBS 112.46 / NRRL 194 / M139) (Aspergillus nidulans)).